A 462-amino-acid polypeptide reads, in one-letter code: Squalene synthase ERG9 (462 aa).

The helical transmembrane segment at 406–426 (AVVLFGVVIAALVCISGLMLG) threads the bilayer.

The protein belongs to the phytoene/squalene synthase family. Mg(2+) serves as cofactor.

It localises to the endoplasmic reticulum membrane. It is found in the microsome. It catalyses the reaction 2 (2E,6E)-farnesyl diphosphate + NADPH + H(+) = squalene + 2 diphosphate + NADP(+). It carries out the reaction 2 (2E,6E)-farnesyl diphosphate + NADH + H(+) = squalene + 2 diphosphate + NAD(+). It participates in terpene metabolism; lanosterol biosynthesis; lanosterol from farnesyl diphosphate: step 1/3. The protein operates within steroid metabolism; ergosterol biosynthesis. Squalene synthase; part of the third module of ergosterol biosynthesis pathway that includes the late steps of the pathway. ERG9 produces squalene from 2 farnesyl pyrophosphate moieties. The third module or late pathway involves the ergosterol synthesis itself through consecutive reactions that mainly occur in the endoplasmic reticulum (ER) membrane. Firstly, the squalene synthase ERG9 catalyzes the condensation of 2 farnesyl pyrophosphate moieties to form squalene, which is the precursor of all steroids. Squalene synthase is crucial for balancing the incorporation of farnesyl diphosphate (FPP) into sterol and nonsterol isoprene synthesis. Secondly, squalene is converted into lanosterol by the consecutive action of the squalene epoxidase ERG1 and the lanosterol synthase ERG7. Then, the delta(24)-sterol C-methyltransferase ERG6 methylates lanosterol at C-24 to produce eburicol. Eburicol is the substrate of the sterol 14-alpha demethylase encoded by CYP51A, CYP51B and CYP51C, to yield 4,4,24-trimethyl ergosta-8,14,24(28)-trienol. CYP51B encodes the enzyme primarily responsible for sterol 14-alpha-demethylation, and plays an essential role in ascospore formation. CYP51A encodes an additional sterol 14-alpha-demethylase, induced on ergosterol depletion and responsible for the intrinsic variation in azole sensitivity. The third CYP51 isoform, CYP51C, does not encode a sterol 14-alpha-demethylase, but is required for full virulence on host wheat ears. The C-14 reductase ERG24 then reduces the C14=C15 double bond which leads to 4,4-dimethylfecosterol. A sequence of further demethylations at C-4, involving the C-4 demethylation complex containing the C-4 methylsterol oxidases ERG25, the sterol-4-alpha-carboxylate 3-dehydrogenase ERG26 and the 3-keto-steroid reductase ERG27, leads to the production of fecosterol via 4-methylfecosterol. ERG28 has a role as a scaffold to help anchor ERG25, ERG26 and ERG27 to the endoplasmic reticulum. The C-8 sterol isomerase ERG2 then catalyzes the reaction which results in unsaturation at C-7 in the B ring of sterols and thus converts fecosterol to episterol. The sterol-C5-desaturases ERG3A and ERG3BB then catalyze the introduction of a C-5 double bond in the B ring to produce 5-dehydroepisterol. The C-22 sterol desaturases ERG5A and ERG5B further convert 5-dehydroepisterol into ergosta-5,7,22,24(28)-tetraen-3beta-ol by forming the C-22(23) double bond in the sterol side chain. Finally, ergosta-5,7,22,24(28)-tetraen-3beta-ol is substrate of the C-24(28) sterol reductase ERG4 to produce ergosterol. The sequence is that of Squalene synthase ERG9 from Gibberella zeae (strain ATCC MYA-4620 / CBS 123657 / FGSC 9075 / NRRL 31084 / PH-1) (Wheat head blight fungus).